Reading from the N-terminus, the 191-residue chain is Protein Ves (191 aa).

This sequence belongs to the Ves family.

This is Protein Ves from Escherichia coli (strain K12 / MC4100 / BW2952).